The primary structure comprises 429 residues: Phosphoribosylamine--glycine ligase (429 aa).

One can recognise an ATP-grasp domain in the interval 109-316 (KDFLARHKIP…LVELCLAACE (208 aa)). 135–196 (LREKGAPIVI…EEFLDGEEAS (62 aa)) contacts ATP. Residues 212–236 (SQDHKRVGDKDTGPNTGGMGAYSPA) are disordered. Positions 213–223 (QDHKRVGDKDT) are enriched in basic and acidic residues. The Mg(2+) site is built by E286 and N288.

It belongs to the GARS family. As to quaternary structure, monomer. The cofactor is Mg(2+). It depends on Mn(2+) as a cofactor.

It carries out the reaction 5-phospho-beta-D-ribosylamine + glycine + ATP = N(1)-(5-phospho-beta-D-ribosyl)glycinamide + ADP + phosphate + H(+). The protein operates within purine metabolism; IMP biosynthesis via de novo pathway; N(1)-(5-phospho-D-ribosyl)glycinamide from 5-phospho-alpha-D-ribose 1-diphosphate: step 2/2. In terms of biological role, catalyzes the reversible conversion of phosphoribosylamine to glycinamide ribonucleotide, an enzymatic step in purine biosynthesis pathway. The chain is Phosphoribosylamine--glycine ligase (purD) from Escherichia coli (strain K12).